The sequence spans 227 residues: Response regulator protein TodT (227 aa).

In terms of domain architecture, Response regulatory spans 28–142 (VIYILDDDNA…ELLGAIRAAL (115 aa)). Aspartate 77 is modified (4-aspartylphosphate). Positions 158–223 (LKENYESLSK…DLVRVTERLK (66 aa)) constitute an HTH luxR-type domain. A DNA-binding region (H-T-H motif) is located at residues 182 to 201 (NKQTALELDISEATVKVHRH).

In terms of processing, phosphorylated by TodS.

It is found in the cytoplasm. Its function is as follows. Member of the two-component regulatory system TodS/TodT involved in the regulation of toluene degradation. Phosphorylated TodT activates transcription of the tod operon (todXFC1C2BADEGIH). Binds specifically to a 6-bp palindromic DNA structure in the tod promoter region. The protein is Response regulator protein TodT (todT) of Pseudomonas putida (strain ATCC 700007 / DSM 6899 / JCM 31910 / BCRC 17059 / LMG 24140 / F1).